Here is a 362-residue protein sequence, read N- to C-terminus: DNA replication and repair protein RecF (362 aa).

30–37 (GLNAQGKS) contributes to the ATP binding site.

The protein belongs to the RecF family.

Its subcellular location is the cytoplasm. Its function is as follows. The RecF protein is involved in DNA metabolism; it is required for DNA replication and normal SOS inducibility. RecF binds preferentially to single-stranded, linear DNA. It also seems to bind ATP. The sequence is that of DNA replication and repair protein RecF from Thermoanaerobacter pseudethanolicus (strain ATCC 33223 / 39E) (Clostridium thermohydrosulfuricum).